Reading from the N-terminus, the 292-residue chain is GTP cyclohydrolase FolE2 (292 aa).

It belongs to the GTP cyclohydrolase IV family.

The catalysed reaction is GTP + H2O = 7,8-dihydroneopterin 3'-triphosphate + formate + H(+). It participates in cofactor biosynthesis; 7,8-dihydroneopterin triphosphate biosynthesis; 7,8-dihydroneopterin triphosphate from GTP: step 1/1. Functionally, converts GTP to 7,8-dihydroneopterin triphosphate. This is GTP cyclohydrolase FolE2 from Staphylococcus epidermidis (strain ATCC 35984 / DSM 28319 / BCRC 17069 / CCUG 31568 / BM 3577 / RP62A).